A 513-amino-acid chain; its full sequence is Maturase K (513 aa).

Belongs to the intron maturase 2 family. MatK subfamily.

It localises to the plastid. The protein localises to the chloroplast. Its function is as follows. Usually encoded in the trnK tRNA gene intron. Probably assists in splicing its own and other chloroplast group II introns. This Sporobolus michauxianus (Prairie cordgrass) protein is Maturase K.